A 465-amino-acid polypeptide reads, in one-letter code: Cysteine--tRNA ligase (465 aa).

Cys27 is a Zn(2+) binding site. Positions 29 to 39 (PTVYDDAHLGH) match the 'HIGH' region motif. The Zn(2+) site is built by Cys207, His237, and Glu241. The 'KMSKS' region signature appears at 269–273 (KMSKS). Lys272 provides a ligand contact to ATP.

Belongs to the class-I aminoacyl-tRNA synthetase family. In terms of assembly, monomer. Zn(2+) is required as a cofactor.

It is found in the cytoplasm. It catalyses the reaction tRNA(Cys) + L-cysteine + ATP = L-cysteinyl-tRNA(Cys) + AMP + diphosphate. This chain is Cysteine--tRNA ligase, found in Helicobacter pylori (strain HPAG1).